The chain runs to 369 residues: 3-dehydroquinate synthase (369 aa).

Residues 75–80 (DGEEHK), 109–113 (GVIGD), 133–134 (TT), Lys146, Lys155, and 173–176 (TLKT) each bind NAD(+). Positions 188, 251, and 268 each coordinate Zn(2+).

This sequence belongs to the sugar phosphate cyclases superfamily. Dehydroquinate synthase family. The cofactor is Co(2+). Zn(2+) is required as a cofactor. It depends on NAD(+) as a cofactor.

The protein resides in the cytoplasm. The enzyme catalyses 7-phospho-2-dehydro-3-deoxy-D-arabino-heptonate = 3-dehydroquinate + phosphate. The protein operates within metabolic intermediate biosynthesis; chorismate biosynthesis; chorismate from D-erythrose 4-phosphate and phosphoenolpyruvate: step 2/7. Catalyzes the conversion of 3-deoxy-D-arabino-heptulosonate 7-phosphate (DAHP) to dehydroquinate (DHQ). The polypeptide is 3-dehydroquinate synthase (Legionella pneumophila (strain Lens)).